We begin with the raw amino-acid sequence, 143 residues long: Agaricus bisporus lectin (143 aa).

Ala29, Ser48, Gly49, and Asn73 together coordinate beta-D-Gal-(1-&gt;3)-alpha-D-GalNAc. Thr82, Arg103, and Tyr114 together coordinate N-acetyl-beta-D-glucosamine.

It belongs to the fungal fruit body lectin family. Homotetramer.

Its function is as follows. Lectin that recognizes O-linked galactose-beta-1,3-N-acetylgalactosamine, a disaccharide (Thomsen-Friedenreich antigen or T-disaccharide), present on cell surface glycoproteins. Can also bind galactose-beta-1,3-N-acetylglucosamine. Does not bind monosaccharides. Can be internalized by clathrin-coated vesicles after binding to surface glycoproteins. After internalization it inhibits nuclear import of nuclear localization signal dependent proteins. Inhibits proliferation of malignant cells without cytotoxicity for normal cells. This Agaricus bisporus (White button mushroom) protein is Agaricus bisporus lectin.